The sequence spans 167 residues: Endoribonuclease YbeY (167 aa).

Residues 64–101 (GKPTNVLSWPSEERASEEPGMAPEPPEPGDPEDPEPLG) form a disordered region. A compositionally biased stretch (acidic residues) spans 90–99 (EPGDPEDPEP). Residues histidine 131, histidine 135, and histidine 141 each coordinate Zn(2+).

This sequence belongs to the endoribonuclease YbeY family. Zn(2+) is required as a cofactor.

The protein resides in the cytoplasm. In terms of biological role, single strand-specific metallo-endoribonuclease involved in late-stage 70S ribosome quality control and in maturation of the 3' terminus of the 16S rRNA. This chain is Endoribonuclease YbeY, found in Cereibacter sphaeroides (strain ATCC 17023 / DSM 158 / JCM 6121 / CCUG 31486 / LMG 2827 / NBRC 12203 / NCIMB 8253 / ATH 2.4.1.) (Rhodobacter sphaeroides).